Consider the following 299-residue polypeptide: Acetaldehyde dehydrogenase 6 (299 aa).

The active-site Acyl-thioester intermediate is cysteine 125. Residues 156 to 164 and asparagine 275 contribute to the NAD(+) site; that span reads GAGPGTRAN.

It belongs to the acetaldehyde dehydrogenase family.

It carries out the reaction acetaldehyde + NAD(+) + CoA = acetyl-CoA + NADH + H(+). The chain is Acetaldehyde dehydrogenase 6 (hpdG) from Rhodococcus jostii (strain RHA1).